The following is an 861-amino-acid chain: ToMV resistance protein Tm-2(GCR236) (861 aa).

Positions V63–D83 form a coiled coil. Residues D162–D388 enclose the NB-ARC domain. Residue G185–T192 coordinates ATP. LRR repeat units lie at residues L225–S248, L305–F327, D388–Y411, L449–G472, V510–K536, M585–L608, T609–S631, I652–P680, L689–P710, L712–Y735, P736–P758, L784–F810, and P811–M835.

This sequence belongs to the disease resistance NB-LRR family. (Microbial infection) Interacts with tobamoviruses mouvement protein at the plasma membrane; this interaction triggers defense responses leading to programmed cell death. In terms of assembly, binds to HSP90 proteins; this interaction seems required for defense responses toward tobamoviruses.

It is found in the cell membrane. Its function is as follows. Inhibitor of viral mouvements which confers resistance to some tobamoviruses including tomato mosaic virus (ToMV) (e.g. isolates L, W3 and SL-1) and tobacco mosaic virus (TMV), but not to resistance-breaking isolates (e.g. B7, LT1, LII, Ltbl, ToMV2, and ToMV1-2) ToMV and tomato brown rugose fruit virus (ToBRFV). Elicits a hypersensitive reaction in response to avirulent (Avr) movement proteins from resistance inducing tobamoviruses (e.g. ToMV and TMV) strains, thus leading to programmed cell death. In Solanum lycopersicum (Tomato), this protein is ToMV resistance protein Tm-2(GCR236).